We begin with the raw amino-acid sequence, 283 residues long: Gap junction beta-1 protein (283 aa).

Residues 1–22 (MNWTGLYTLLSGVNRHSTAIGR) are Cytoplasmic-facing. Residues 23–45 (VWLSVIFIFRIMVLVVAAESVWG) traverse the membrane as a helical segment. The Extracellular segment spans residues 46–75 (DEKSSFICNTLQPGCNSVCYDHFFPISHVR). Residues 76 to 95 (LWSLQLILVSTPALLVAMHV) traverse the membrane as a helical segment. Residues 96–130 (AHQQHIEKKMLRLEGHGDPLHLEEVKRHKVHISGT) are Cytoplasmic-facing. A helical transmembrane segment spans residues 131–153 (LWWTYVISVVFRLLFEAVFMYVF). Topologically, residues 154-191 (YLLYPGYAMVRLVKCEAFPCPNTVDCFVSRPTEKTVFT) are extracellular. A helical membrane pass occupies residues 192–214 (VFMLAASGICIILNVAEVVYLII). Topologically, residues 215-283 (RACARRAQRR…AEKSDRCSAC (69 aa)) are cytoplasmic. Ser233, Ser258, Ser266, and Ser277 each carry phosphoserine.

The protein belongs to the connexin family. Beta-type (group I) subfamily. A connexon is composed of a hexamer of connexins. Interacts with CNST.

The protein resides in the cell membrane. The protein localises to the cell junction. It is found in the gap junction. Its function is as follows. One gap junction consists of a cluster of closely packed pairs of transmembrane channels, the connexons, through which materials of low MW diffuse from one cell to a neighboring cell. The protein is Gap junction beta-1 protein (Gjb1) of Mus musculus (Mouse).